The following is a 461-amino-acid chain: mRNA cap guanine-N(7) methyltransferase (461 aa).

The interval 1-117 (MESSVKASVD…RKLQPQDALE (117 aa)) is disordered. Phosphoserine is present on residues Ser11, Ser15, Ser16, and Ser58. Composition is skewed to polar residues over residues 14–29 (ESSP…SGQR) and 49–58 (EQNSSYVQDS). The span at 65–93 (LDVEIILDEKHSEDDGGASKRSKLERGGG) shows a compositional bias: basic and acidic residues. Phosphoserine occurs at positions 94 and 99. The Nuclear localization signal signature appears at 107 to 109 (KRK). Residues 152-460 (SRIFYLRNFN…IYLVFAFEKQ (309 aa)) form the mRNA cap 0 methyltransferase domain. 161–162 (NN) contacts mRNA. Lys165, Gly190, Asp212, Asp246, Gln269, and Tyr274 together coordinate S-adenosyl-L-methionine.

Belongs to the class I-like SAM-binding methyltransferase superfamily. mRNA cap 0 methyltransferase family. Interacts with importin alpha, leading to stimulate both RNA-binding and methyltransferase activity. Interaction with importin alpha and beta is required for its nuclear localization, importin beta dissociating in response to RanGTP, allowing RNMT-importin alpha to bind RNA substrates. Interacts with elongating form of polymerase II and RNGTT. Interacts with RAMAC, this interaction significantly enhances RNA-binding and cap methyltransferase activity.

Its subcellular location is the nucleus. It carries out the reaction a 5'-end (5'-triphosphoguanosine)-ribonucleoside in mRNA + S-adenosyl-L-methionine = a 5'-end (N(7)-methyl 5'-triphosphoguanosine)-ribonucleoside in mRNA + S-adenosyl-L-homocysteine. Its activity is regulated as follows. Methyltransferase activity is activated by RAMAC. Its function is as follows. Catalytic subunit of the mRNA-capping methyltransferase RNMT:RAMAC complex that methylates the N7 position of the added guanosine to the 5'-cap structure of mRNAs. Binds RNA containing 5'-terminal GpppC. The sequence is that of mRNA cap guanine-N(7) methyltransferase (Rnmt) from Rattus norvegicus (Rat).